The following is a 249-amino-acid chain: MKKNIIAGCLFSLFSLSALAAIPAGNDATTKPDLYYLKNEQAIDSLKLLPPPPEVGSIQFLNDQAMYEKGRMLRNTERGKQAQADADLAAGGVATAFSGAFGYPITEKDSPELYKLLTNMIEDAGDLATRSAKEHYMRIRPFAFYGTETCNTKDQKKLSTNGSYPSGHTSIGWATALVLAEVNPANQDAILERGYQLGQSRVICGYHWQSDVDAARIVGSAAVATLHSDPAFQAQLAKAKQEFAQKSQK.

The first 20 residues, 1–20 (MKKNIIAGCLFSLFSLSALA), serve as a signal peptide directing secretion.

It belongs to the class A bacterial acid phosphatase family. As to quaternary structure, homotetramer.

It localises to the periplasm. It carries out the reaction a phosphate monoester + H2O = an alcohol + phosphate. The sequence is that of Major phosphate-irrepressible acid phosphatase (phoC) from Morganella morganii (Proteus morganii).